Reading from the N-terminus, the 249-residue chain is 5'-nucleotidase SurE (249 aa).

A divalent metal cation is bound by residues D9, D10, S40, and N92.

This sequence belongs to the SurE nucleotidase family. A divalent metal cation is required as a cofactor.

The protein resides in the cytoplasm. It carries out the reaction a ribonucleoside 5'-phosphate + H2O = a ribonucleoside + phosphate. Its function is as follows. Nucleotidase that shows phosphatase activity on nucleoside 5'-monophosphates. This chain is 5'-nucleotidase SurE, found in Shewanella putrefaciens (strain CN-32 / ATCC BAA-453).